We begin with the raw amino-acid sequence, 112 residues long: Large ribosomal subunit protein mL53 (112 aa).

The protein belongs to the mitochondrion-specific ribosomal protein mL53 family. As to quaternary structure, component of the mitochondrial ribosome large subunit (39S) which comprises a 16S rRNA and about 50 distinct proteins.

Its subcellular location is the mitochondrion. This chain is Large ribosomal subunit protein mL53 (MRPL53), found in Pongo abelii (Sumatran orangutan).